We begin with the raw amino-acid sequence, 130 residues long: Phosphoribosyl-ATP pyrophosphatase (130 aa).

The protein belongs to the PRA-PH family.

The protein resides in the cytoplasm. The enzyme catalyses 1-(5-phospho-beta-D-ribosyl)-ATP + H2O = 1-(5-phospho-beta-D-ribosyl)-5'-AMP + diphosphate + H(+). Its pathway is amino-acid biosynthesis; L-histidine biosynthesis; L-histidine from 5-phospho-alpha-D-ribose 1-diphosphate: step 2/9. This is Phosphoribosyl-ATP pyrophosphatase from Albidiferax ferrireducens (strain ATCC BAA-621 / DSM 15236 / T118) (Rhodoferax ferrireducens).